The following is a 213-amino-acid chain: Octanoyltransferase (213 aa).

Residues 32–207 (ESTLDEIWLV…NILALLNNPD (176 aa)) form the BPL/LPL catalytic domain. Residues 71–78 (RGGQVTYH), 138–140 (SLG), and 151–153 (GLA) each bind substrate. Catalysis depends on C169, which acts as the Acyl-thioester intermediate.

The protein belongs to the LipB family.

Its subcellular location is the cytoplasm. The catalysed reaction is octanoyl-[ACP] + L-lysyl-[protein] = N(6)-octanoyl-L-lysyl-[protein] + holo-[ACP] + H(+). The protein operates within protein modification; protein lipoylation via endogenous pathway; protein N(6)-(lipoyl)lysine from octanoyl-[acyl-carrier-protein]: step 1/2. Its function is as follows. Catalyzes the transfer of endogenously produced octanoic acid from octanoyl-acyl-carrier-protein onto the lipoyl domains of lipoate-dependent enzymes. Lipoyl-ACP can also act as a substrate although octanoyl-ACP is likely to be the physiological substrate. The protein is Octanoyltransferase of Escherichia coli (strain SMS-3-5 / SECEC).